A 768-amino-acid chain; its full sequence is MINIEDISKSSNQSEEKQLKSTSSKPKYSFAAKSLFKGSNNITPYYLSTSNTFQCVASESIQTWLLSDDGHIFTSSGNFVLDVSSGGYFVELVQLNSNSKTQIWTIDTTNNKIQNQGNGNYLDIDCFNICVAPLNGNATQQWTTFRRAPIPTGNWGYFQSKQLNSNNYWGLSVLNNSTSYNTSVVMNKVQAKSKGQIWQMTSDGHILSRLDGNLVLDIGPSINGSTTNYYLNTNVYKANDLMQQWGINENNQIFNQYYPNLCIGFVGQLGVDSTVNCVLAQPSSACDTYFQFIANPTYSLNQIVGEVPEPFPAYTSGDLLASYQYLSNDATSNFTDDIRSLYTGINVSLQSFLSIVTNATCPSSIHSTEDFSNVQNQIKTELIYAINVRLVFENYSGFYSKLFSQGSSNLTNLANLINVDMSSNQMVNANYTDAITSIFYSLISEIPVGGPIIANIGQSAVEFGELMSQSNYQGASTYQVELSQLYTHLNTNYENEMANAQSMKDTILQDWGMMSKTYALCFLPTNDPSSLNMNGLDFDEISDVASVAYEIAMIQMLLPTTYQIYFTPAGYWVPYSDGDFAYSDNSGTYIMATIEYSNSYPPKELTDKLWNNGVSKQEFFLSAYGWNLATSLTYYNNTKQHNNIFKLAFPTIKNFTGVPMQFVMTNEGDNLGNFTVKTHFAKFFSTYYSCGEAGHHYFDIAVTDINKNKVANFTVDIKLKALEGSYVSIKTGSLVVQPGYAVGNPICNQGSYSLMFSASILIPIYKSE.

Positions 1 to 22 (MINIEDISKSSNQSEEKQLKST) are disordered. 2 Ricin B-type lectin domains span residues 1–107 (MINI…WTID) and 100–248 (KTQI…WGIN).

It belongs to the cup family.

The protein localises to the cytoplasm. It is found in the membrane. Its function is as follows. May play an important role in stabilizing and/or regulating the cell membrane during Ca(2+) stress or certain stages of development. The polypeptide is Calcium up-regulated protein G (cupG) (Dictyostelium discoideum (Social amoeba)).